Consider the following 1200-residue polypeptide: SR-related and CTD-associated factor 4 (1200 aa).

One can recognise a CID domain in the interval 1 to 139 (MDAVNAFNQE…PLLDMAAGTS (139 aa)). Lysine 49 is subject to N6-acetyllysine. Residues 140 to 153 (NAAPGAENVTNNEG) show a composition bias toward polar residues. 3 disordered regions span residues 140 to 172 (NAAP…PTNS), 299 to 324 (VPAS…MQQP), and 346 to 566 (SMQH…QIKS). Serine 154 bears the Phosphoserine mark. Pro residues-rich tracts occupy residues 367–390 (APPP…PGMP) and 399–461 (LPQP…PPVQ). Over residues 462 to 471 (PTFQPTFQPQ) the composition is skewed to low complexity. Residues 493–503 (EVKRHVPESRK) are compositionally biased toward basic and acidic residues. Over residues 504–541 (SRSRSPKRRRSRSGSRSRRSRHRRSRSRSRDRRRHSPR) the composition is skewed to basic residues. Positions 543 to 558 (RSQERRDREKERERRQ) are enriched in basic and acidic residues. Positions 574 to 648 (TTLWVGQLDK…KSIKIAWALN (75 aa)) constitute an RRM domain. Disordered regions lie at residues 696–724 (WKGI…VSPI), 834–875 (VSGA…SLLG), and 927–1200 (PPHM…EAPR). Serine 722 carries the post-translational modification Phosphoserine. Composition is skewed to pro residues over residues 856–868 (PAAP…PPVT) and 927–958 (PPHM…PPHG). The span at 965 to 978 (GMPGLGGPGPGPGG) shows a compositional bias: gly residues. Residues 986–1036 (QQQPQQQQQQQQQQQQQQQQQQQQPPPQQSQTQQQPAPSQQPAPAQQQPQQ) are compositionally biased toward low complexity. The residue at position 1058 (serine 1058) is a Phosphoserine. Residues 1063–1139 (VENDRERYGS…RGKEKHEVAD (77 aa)) show a composition bias toward basic and acidic residues. Polar residues predominate over residues 1153–1162 (QVGNTDTVSE). The residue at position 1178 (serine 1178) is a Phosphoserine.

In terms of assembly, interacts with POLR2A; via C-terminal heptapeptide repeat domain (CTD) phosphorylated at 'Ser-2' and 'Ser-5'.

The protein localises to the nucleus. Functionally, anti-terminator protein required to prevent early mRNA termination during transcription. Together with SCAF8, acts by suppressing the use of early, alternative poly(A) sites, thereby preventing the accumulation of non-functional truncated proteins. Mechanistically, associates with the phosphorylated C-terminal heptapeptide repeat domain (CTD) of the largest RNA polymerase II subunit (POLR2A), and subsequently binds nascent RNA upstream of early polyadenylation sites to prevent premature mRNA transcript cleavage and polyadenylation. Independently of SCAF8, also acts as a suppressor of transcriptional readthrough. This chain is SR-related and CTD-associated factor 4, found in Rattus norvegicus (Rat).